The sequence spans 485 residues: Glutamyl-tRNA(Gln) amidotransferase subunit A (485 aa).

Catalysis depends on charge relay system residues Lys-79 and Ser-154. The active-site Acyl-ester intermediate is the Ser-178.

Belongs to the amidase family. GatA subfamily. As to quaternary structure, heterotrimer of A, B and C subunits.

The enzyme catalyses L-glutamyl-tRNA(Gln) + L-glutamine + ATP + H2O = L-glutaminyl-tRNA(Gln) + L-glutamate + ADP + phosphate + H(+). In terms of biological role, allows the formation of correctly charged Gln-tRNA(Gln) through the transamidation of misacylated Glu-tRNA(Gln) in organisms which lack glutaminyl-tRNA synthetase. The reaction takes place in the presence of glutamine and ATP through an activated gamma-phospho-Glu-tRNA(Gln). The chain is Glutamyl-tRNA(Gln) amidotransferase subunit A from Staphylococcus haemolyticus (strain JCSC1435).